The chain runs to 344 residues: Biotin synthase (344 aa).

Positions 36-260 (NQIQISTLLS…MMPTSYIRLS (225 aa)) constitute a Radical SAM core domain. The [4Fe-4S] cluster site is built by cysteine 51, cysteine 55, and cysteine 58. [2Fe-2S] cluster is bound by residues cysteine 95, cysteine 126, cysteine 186, and arginine 258.

Belongs to the radical SAM superfamily. Biotin synthase family. Homodimer. [4Fe-4S] cluster is required as a cofactor. It depends on [2Fe-2S] cluster as a cofactor.

The catalysed reaction is (4R,5S)-dethiobiotin + (sulfur carrier)-SH + 2 reduced [2Fe-2S]-[ferredoxin] + 2 S-adenosyl-L-methionine = (sulfur carrier)-H + biotin + 2 5'-deoxyadenosine + 2 L-methionine + 2 oxidized [2Fe-2S]-[ferredoxin]. The protein operates within cofactor biosynthesis; biotin biosynthesis; biotin from 7,8-diaminononanoate: step 2/2. Catalyzes the conversion of dethiobiotin (DTB) to biotin by the insertion of a sulfur atom into dethiobiotin via a radical-based mechanism. This chain is Biotin synthase, found in Buchnera aphidicola subsp. Baizongia pistaciae (strain Bp).